The primary structure comprises 470 residues: Ribulose bisphosphate carboxylase large chain (470 aa).

Substrate-binding residues include asparagine 115 and threonine 165. Lysine 167 (proton acceptor) is an active-site residue. Substrate is bound at residue lysine 169. The Mg(2+) site is built by lysine 193, aspartate 195, and glutamate 196. Position 193 is an N6-carboxylysine (lysine 193). Histidine 286 acts as the Proton acceptor in catalysis. Arginine 287, histidine 319, and serine 371 together coordinate substrate.

The protein belongs to the RuBisCO large chain family. Type I subfamily. Heterohexadecamer of 8 large chains and 8 small chains. Mg(2+) serves as cofactor.

The protein localises to the carboxysome. It carries out the reaction 2 (2R)-3-phosphoglycerate + 2 H(+) = D-ribulose 1,5-bisphosphate + CO2 + H2O. It catalyses the reaction D-ribulose 1,5-bisphosphate + O2 = 2-phosphoglycolate + (2R)-3-phosphoglycerate + 2 H(+). Its function is as follows. RuBisCO catalyzes two reactions: the carboxylation of D-ribulose 1,5-bisphosphate, the primary event in carbon dioxide fixation, as well as the oxidative fragmentation of the pentose substrate in the photorespiration process. Both reactions occur simultaneously and in competition at the same active site. This chain is Ribulose bisphosphate carboxylase large chain, found in Prochlorococcus marinus (strain MIT 9303).